The following is a 305-amino-acid chain: Ornithine carbamoyltransferase (305 aa).

Residues 53 to 56, Gln-80, Arg-104, and 131 to 134 contribute to the carbamoyl phosphate site; these read STRT and HPCQ. L-ornithine is bound by residues Asn-162, Asp-219, and 223–224; that span reads SM. Residues 259–260 and Arg-287 each bind carbamoyl phosphate; that span reads CL.

The protein belongs to the aspartate/ornithine carbamoyltransferase superfamily. OTCase family.

The protein localises to the cytoplasm. The catalysed reaction is carbamoyl phosphate + L-ornithine = L-citrulline + phosphate + H(+). It functions in the pathway amino-acid biosynthesis; L-arginine biosynthesis; L-arginine from L-ornithine and carbamoyl phosphate: step 1/3. Reversibly catalyzes the transfer of the carbamoyl group from carbamoyl phosphate (CP) to the N(epsilon) atom of ornithine (ORN) to produce L-citrulline. This Psychrobacter cryohalolentis (strain ATCC BAA-1226 / DSM 17306 / VKM B-2378 / K5) protein is Ornithine carbamoyltransferase.